Consider the following 154-residue polypeptide: SsrA-binding protein (154 aa).

Residues 135-154 are disordered; sequence KREDLKRRQDQRDMARAMKR.

Belongs to the SmpB family.

It localises to the cytoplasm. Required for rescue of stalled ribosomes mediated by trans-translation. Binds to transfer-messenger RNA (tmRNA), required for stable association of tmRNA with ribosomes. tmRNA and SmpB together mimic tRNA shape, replacing the anticodon stem-loop with SmpB. tmRNA is encoded by the ssrA gene; the 2 termini fold to resemble tRNA(Ala) and it encodes a 'tag peptide', a short internal open reading frame. During trans-translation Ala-aminoacylated tmRNA acts like a tRNA, entering the A-site of stalled ribosomes, displacing the stalled mRNA. The ribosome then switches to translate the ORF on the tmRNA; the nascent peptide is terminated with the 'tag peptide' encoded by the tmRNA and targeted for degradation. The ribosome is freed to recommence translation, which seems to be the essential function of trans-translation. The polypeptide is SsrA-binding protein (Microcystis aeruginosa (strain NIES-843 / IAM M-2473)).